We begin with the raw amino-acid sequence, 1136 residues long: MNELKHAVVPIDLQSFCLEGTLALWVPALENDSEDDSEAIETADDNEKLFKKECVAYDAGVYTSNKSKGSQTLRWSIFQNRTLTIFDVSLNSKKEPLSKFNVKIHFPSNVMKDGVAFSFSEHSDTTIIYAITHARVLYYIRLSKTWFQLPDARLDDDWCLCYRPISFLNQKPDLMAAISTSEICVSFFNGGLTKIILNPKDASHYEQHIDDSSYLFSLKKYLSLQAFKADYRSPNTIISMIFLSTYNVLVMLSLDYKLKVLDLSTNQCVETIELSQTILPLQSFPYLTSDHTTNSFIALYYPDNSHGSFSIYKLNANAHSFKLNVVIEKGIIPPSLPDDEFIPWMLSDFQLISSEGSQSKFLLIIAWKSNLNTVIQKCNLSLDQDESFSCVWSHSLDSFSLIEKTFFDVPTNMSSGDISEIWLQHIFAHNTSIESIQVALLSFQNSSSQVSKNKLDKFGALTISELKNAVLSSIVSTIQIEPNSDLTGYDYYEYKRLLYNEWERFAKLVAYLDHFGDEILSINFDPSNAVTYINYANKVAFIRDPYLIESFDEEPLTKLISSLETDDPSLIEGYQILDLGRSLHSCMSFSTLSEIRYSLRELVQDLPSYSLFDTLWVFYDKHIYPNVDPDYISTLIDTLVSLENPMRDIDSLIQRLRSFDIYNHSAQSPSLFLCASVARVLDSILKKFQVSIEGFIFLLSLITSQQDYELQSKFAGCDKLFLSLLEDWRLVSFLLENSALLLEKFEEEDVDSTNCNLNTMEALASVNTALQFFSALNYSECFSESQISPLHATVISSLSAIFIRDDTENDLVTELVEKLFLFKQYNACMQLIGWLNSDPIAVYLKALIYLKSKEAVKAVRCFKTTSLVLYSHTSQFAVLREFQEIAEKYHHQNLLSCYYLHLSKKLFEESAYIDALEFSLLADASKETDDEDLSIAITHETLKTACAAGKFDAAHVALMVLSTTPLKKSCLLDFVNQLTKQGKINQLLNYSMPTLRQDVDNLLERKAFQMINVESQPCWYNILFSWRYKHQNYRDAAAIIYEKLSRYISTTELIGKKERTFIIEHYLIVLNTLELLPKEDTWILVTDMSVDKEPDPNFLPQKLLTLDAIVAEYHLQLKDVAVQVTAEMSSAMNIDL.

Component of the npc107-120 complex which consists of nup85, nup107, nup120, nup131, nup132 and seh1. Interacts with nup107.

The protein resides in the nucleus. Its function is as follows. Functions as a component of the nuclear pore complex (NPC). NPC components, collectively referred to as nucleoporins (NUPs), can play the role of both NPC structural components and of docking or interaction partners for transiently associated nuclear transport factors. Active directional transport is assured by both, a Phe-Gly (FG) repeat affinity gradient for these transport factors across the NPC and a transport cofactor concentration gradient across the nuclear envelope. In Schizosaccharomyces pombe (strain 972 / ATCC 24843) (Fission yeast), this protein is Nucleoporin nup120 (nup120).